Reading from the N-terminus, the 549-residue chain is Probable protein kinase UbiB (549 aa).

The 379-residue stretch at 123 to 501 folds into the Protein kinase domain; sequence DFDETPLASA…QQQAHKSNYM (379 aa). ATP-binding positions include 129–137 and lysine 152; that span reads LASASISQV. Aspartate 287 functions as the Proton acceptor in the catalytic mechanism. The next 2 membrane-spanning stretches (helical) occupy residues 499–516 and 521–540; these read NYML…TLLF and TLWS…FIGW.

It belongs to the ABC1 family. UbiB subfamily.

The protein localises to the cell inner membrane. It participates in cofactor biosynthesis; ubiquinone biosynthesis [regulation]. In terms of biological role, is probably a protein kinase regulator of UbiI activity which is involved in aerobic coenzyme Q (ubiquinone) biosynthesis. The polypeptide is Probable protein kinase UbiB (Shewanella sp. (strain W3-18-1)).